A 598-amino-acid chain; its full sequence is Thiol:disulfide interchange protein DsbD (598 aa).

The signal sequence occupies residues Met-1 to Ala-21. Cys-130 and Cys-136 are oxidised to a cystine. A disordered region spans residues Thr-158 to Leu-180. The segment covering Met-159–Leu-180 has biased composition (polar residues). The next 8 membrane-spanning stretches (helical) occupy residues Leu-198–Leu-220, Leu-240–Leu-262, Leu-274–Leu-296, Ala-324–Ala-346, Thr-353–Phe-375, Gly-385–Glu-407, Trp-414–Tyr-431, and Ala-446–Ala-468. Cys-212 and Cys-333 are disulfide-bonded. The 143-residue stretch at Phe-456 to Asn-598 folds into the Thioredoxin domain. The cysteines at positions 513 and 516 are disulfide-linked.

It belongs to the thioredoxin family. DsbD subfamily.

It localises to the cell inner membrane. The enzyme catalyses [protein]-dithiol + NAD(+) = [protein]-disulfide + NADH + H(+). It catalyses the reaction [protein]-dithiol + NADP(+) = [protein]-disulfide + NADPH + H(+). Required to facilitate the formation of correct disulfide bonds in some periplasmic proteins and for the assembly of the periplasmic c-type cytochromes. Acts by transferring electrons from cytoplasmic thioredoxin to the periplasm. This transfer involves a cascade of disulfide bond formation and reduction steps. The chain is Thiol:disulfide interchange protein DsbD from Vibrio vulnificus (strain YJ016).